The chain runs to 381 residues: Hydrogenase nickel incorporation protein HupN (381 aa).

Topologically, residues 1–39 (MLPFSMTGLEKDHTRGVLILANAHRRSERSRTASCAGPA) are cytoplasmic. The helical transmembrane segment at 40–60 (VLFGGLITANIVAWAWAFALF) threads the bilayer. Residues 61–63 (ADR) lie on the Periplasmic side of the membrane. A helical membrane pass occupies residues 64–84 (PVVMATALLAWVFGLRHAVDA). At 85-110 (DHIAAIDNVVRSLMQTGGTPRSAGLY) the chain is on the cytoplasmic side. The helical transmembrane segment at 111 to 131 (FALGHSSVVVVATMLLALGVV) threads the bilayer. Topologically, residues 132–149 (SLGGDGLLKEIGSFIGAS) are periplasmic. The chain crosses the membrane as a helical span at residues 150 to 170 (VSALFLLVIAAINLAIFASLW). Residues 171–215 (RTFRKAREQGIRDAAGLDALLAHRGILVRLLGPMFRLVTKPWHMY) are Cytoplasmic-facing. Residues 216–236 (PLGFLFGLGFDTATEIGLLSI) form a helical membrane-spanning segment. Residues 237-243 (SASEAAR) are Periplasmic-facing. The chain crosses the membrane as a helical span at residues 244–264 (GASLADVMVFPALFAAGMALV). Residues 265–292 (DTADSTLMVSAYRWAFVDPMRKLWYNLT) are Cytoplasmic-facing. Residues 293–313 (ITGASVAVALFIGGIEALGLI) traverse the membrane as a helical segment. Over 314–333 (GNRLDLSGGVWTLIDALNES) the chain is Periplasmic. The chain crosses the membrane as a helical span at residues 334–354 (LANVGLAVIALFAIAWLLSIV). Topologically, residues 355–381 (LYRRLIAGSSGLADTEVLECADATEAV) are cytoplasmic.

This sequence belongs to the NiCoT transporter (TC 2.A.52) family.

The protein resides in the cell inner membrane. In terms of biological role, involved in nickel incorporation/metabolism into the hydrogenase apoprotein. In Bradyrhizobium diazoefficiens (strain JCM 10833 / BCRC 13528 / IAM 13628 / NBRC 14792 / USDA 110), this protein is Hydrogenase nickel incorporation protein HupN (hupN).